Here is a 138-residue protein sequence, read N- to C-terminus: Phosphoribosyl-AMP cyclohydrolase (138 aa).

A Mg(2+)-binding site is contributed by aspartate 84. Cysteine 85 is a binding site for Zn(2+). Positions 86 and 88 each coordinate Mg(2+). Zn(2+) is bound by residues cysteine 102 and cysteine 109.

Belongs to the PRA-CH family. In terms of assembly, homodimer. It depends on Mg(2+) as a cofactor. Zn(2+) serves as cofactor.

Its subcellular location is the cytoplasm. It catalyses the reaction 1-(5-phospho-beta-D-ribosyl)-5'-AMP + H2O = 1-(5-phospho-beta-D-ribosyl)-5-[(5-phospho-beta-D-ribosylamino)methylideneamino]imidazole-4-carboxamide. Its pathway is amino-acid biosynthesis; L-histidine biosynthesis; L-histidine from 5-phospho-alpha-D-ribose 1-diphosphate: step 3/9. In terms of biological role, catalyzes the hydrolysis of the adenine ring of phosphoribosyl-AMP. In Burkholderia orbicola (strain MC0-3), this protein is Phosphoribosyl-AMP cyclohydrolase.